We begin with the raw amino-acid sequence, 382 residues long: GDP-mannose 4,6 dehydratase 2 (382 aa).

Residues 40–45 (GITGQD), 97–98 (DM), 119–123 (LAAQS), and Y134 contribute to the NADP(+) site. T166 is a catalytic residue. Residues E168 and Y190 each act as nucleophile in the active site. K194, H220, and R225 together coordinate NADP(+).

This sequence belongs to the NAD(P)-dependent epimerase/dehydratase family. GDP-mannose 4,6-dehydratase subfamily. NADP(+) is required as a cofactor.

It catalyses the reaction GDP-alpha-D-mannose = GDP-4-dehydro-alpha-D-rhamnose + H2O. It functions in the pathway nucleotide-sugar biosynthesis; GDP-L-fucose biosynthesis via de novo pathway; GDP-L-fucose from GDP-alpha-D-mannose: step 1/2. In terms of biological role, catalyzes the conversion of GDP-D-mannose to GDP-4-dehydro-6-deoxy-D-mannose. The protein is GDP-mannose 4,6 dehydratase 2 (gmd-2) of Caenorhabditis elegans.